Consider the following 264-residue polypeptide: NAD kinase (264 aa).

The Proton acceptor role is filled by Asp45. NAD(+)-binding positions include 45–46 (DG), 121–122 (NE), Arg147, Asp149, Ala184, and Gln221.

Belongs to the NAD kinase family. It depends on a divalent metal cation as a cofactor.

It localises to the cytoplasm. The enzyme catalyses NAD(+) + ATP = ADP + NADP(+) + H(+). In terms of biological role, involved in the regulation of the intracellular balance of NAD and NADP, and is a key enzyme in the biosynthesis of NADP. Catalyzes specifically the phosphorylation on 2'-hydroxyl of the adenosine moiety of NAD to yield NADP. This chain is NAD kinase, found in Leuconostoc mesenteroides subsp. mesenteroides (strain ATCC 8293 / DSM 20343 / BCRC 11652 / CCM 1803 / JCM 6124 / NCDO 523 / NBRC 100496 / NCIMB 8023 / NCTC 12954 / NRRL B-1118 / 37Y).